The chain runs to 529 residues: Bifunctional purine biosynthesis protein PurH (529 aa).

The region spanning 1–148 (MQQRRPVRRA…KNHKDVAIVV (148 aa)) is the MGS-like domain. Position 287 is an N6-acetyllysine (lysine 287).

It belongs to the PurH family.

It catalyses the reaction (6R)-10-formyltetrahydrofolate + 5-amino-1-(5-phospho-beta-D-ribosyl)imidazole-4-carboxamide = 5-formamido-1-(5-phospho-D-ribosyl)imidazole-4-carboxamide + (6S)-5,6,7,8-tetrahydrofolate. It carries out the reaction IMP + H2O = 5-formamido-1-(5-phospho-D-ribosyl)imidazole-4-carboxamide. Its pathway is purine metabolism; IMP biosynthesis via de novo pathway; 5-formamido-1-(5-phospho-D-ribosyl)imidazole-4-carboxamide from 5-amino-1-(5-phospho-D-ribosyl)imidazole-4-carboxamide (10-formyl THF route): step 1/1. The protein operates within purine metabolism; IMP biosynthesis via de novo pathway; IMP from 5-formamido-1-(5-phospho-D-ribosyl)imidazole-4-carboxamide: step 1/1. The protein is Bifunctional purine biosynthesis protein PurH of Escherichia fergusonii (strain ATCC 35469 / DSM 13698 / CCUG 18766 / IAM 14443 / JCM 21226 / LMG 7866 / NBRC 102419 / NCTC 12128 / CDC 0568-73).